Consider the following 476-residue polypeptide: 23S rRNA (uracil(1939)-C(5))-methyltransferase RlmD (476 aa).

Positions 1–55 constitute a TRAM domain; that stretch reads MVDEVLKIESLDLEARGIARRDGKVVFVEGALPGERVYAATVRRKPSYEIARVET. Residues Cys68, Cys74, Cys77, and Cys156 each contribute to the [4Fe-4S] cluster site. S-adenosyl-L-methionine-binding residues include Gln265, Phe294, Asn299, Glu315, Asn343, and Asp364. The active-site Nucleophile is Cys394.

The protein belongs to the class I-like SAM-binding methyltransferase superfamily. RNA M5U methyltransferase family. RlmD subfamily.

The enzyme catalyses uridine(1939) in 23S rRNA + S-adenosyl-L-methionine = 5-methyluridine(1939) in 23S rRNA + S-adenosyl-L-homocysteine + H(+). Its function is as follows. Catalyzes the formation of 5-methyl-uridine at position 1939 (m5U1939) in 23S rRNA. The sequence is that of 23S rRNA (uracil(1939)-C(5))-methyltransferase RlmD from Bordetella avium (strain 197N).